The chain runs to 164 residues: Arginine repressor (164 aa).

Belongs to the ArgR family.

It is found in the cytoplasm. It functions in the pathway amino-acid biosynthesis; L-arginine biosynthesis [regulation]. Its function is as follows. Regulates arginine biosynthesis genes. The sequence is that of Arginine repressor from Mycolicibacterium paratuberculosis (strain ATCC BAA-968 / K-10) (Mycobacterium paratuberculosis).